The following is a 215-amino-acid chain: 3-isopropylmalate dehydratase small subunit (215 aa).

It belongs to the LeuD family. LeuD type 1 subfamily. As to quaternary structure, heterodimer of LeuC and LeuD.

It catalyses the reaction (2R,3S)-3-isopropylmalate = (2S)-2-isopropylmalate. Its pathway is amino-acid biosynthesis; L-leucine biosynthesis; L-leucine from 3-methyl-2-oxobutanoate: step 2/4. In terms of biological role, catalyzes the isomerization between 2-isopropylmalate and 3-isopropylmalate, via the formation of 2-isopropylmaleate. In Ectopseudomonas mendocina (strain ymp) (Pseudomonas mendocina), this protein is 3-isopropylmalate dehydratase small subunit.